Reading from the N-terminus, the 103-residue chain is UPF0235 protein RHECIAT_CH0004196 (103 aa).

This sequence belongs to the UPF0235 family.

This Rhizobium etli (strain CIAT 652) protein is UPF0235 protein RHECIAT_CH0004196.